Reading from the N-terminus, the 483-residue chain is Alginate biosynthesis protein AlgA (483 aa).

Belongs to the mannose-6-phosphate isomerase type 2 family. As to quaternary structure, monomer. Co(2+) serves as cofactor.

The catalysed reaction is D-mannose 6-phosphate = D-fructose 6-phosphate. It catalyses the reaction alpha-D-mannose 1-phosphate + GTP + H(+) = GDP-alpha-D-mannose + diphosphate. The protein operates within nucleotide-sugar biosynthesis; GDP-alpha-D-mannose biosynthesis; GDP-alpha-D-mannose from alpha-D-mannose 1-phosphate (GTP route): step 1/1. It functions in the pathway nucleotide-sugar biosynthesis; GDP-alpha-D-mannose biosynthesis; alpha-D-mannose 1-phosphate from D-fructose 6-phosphate: step 1/2. Produces a precursor for alginate polymerization. The alginate layer provides a protective barrier against host immune defenses and antibiotics. The sequence is that of Alginate biosynthesis protein AlgA (algA) from Pseudomonas syringae pv. tomato (strain ATCC BAA-871 / DC3000).